Here is a 495-residue protein sequence, read N- to C-terminus: E3 ubiquitin-protein ligase RAD18 (495 aa).

Position 1 is an N-acetylmethionine (Met1). The RING-type zinc-finger motif lies at 25-64 (CGICFEYFNIAMIIPQCSHNYCSLCIRKFLSYKTQCPTCC). A phosphoserine mark is found at Ser99 and Ser103. At Thr118 the chain carries Phosphothreonine. A phosphoserine mark is found at Ser122, Ser125, Ser142, Ser158, and Ser164. A disordered region spans residues 152–197 (ENKSKFSPQKEASPAAKTKETRSVEEIAPDPSEAKRPEPPSTSTLK). Residues 201-228 (KVDCPVCGVNIPESHINKHLDSCLSREE) form a UBZ4-type zinc finger. The Zn(2+) site is built by Cys204, Cys207, His219, and Cys223. Residues 232–240 (SLRSSVHKR) carry the LR motif motif. Residues 248 to 282 (YNLLSDRDLKKKLKEHGLSIQGNKQQLIKRHQEFV) enclose the SAP domain. Phosphoserine is present on Ser322. A Glycyl lysine isopeptide (Lys-Gly) (interchain with G-Cter in SUMO2) cross-link involves residue Lys376. 2 disordered regions span residues 400–423 (NHFS…DSSS) and 456–495 (AWEA…RNRN). Residues 410–421 (PEELEPDREEDS) are compositionally biased toward acidic residues. Residues Ser471 and Ser483 each carry the phosphoserine modification. Positions 479 to 495 (RAAESAEIEPRNKRNRN) are enriched in basic and acidic residues.

This sequence belongs to the RAD18 family. Homodimer. Interacts with UBE2A and UBE2B, one homodimer binding one molecule of UBE2B. Interacts with SHPRH. Interacts with HLTF. Interacts with SPRTN; leading to enhance chromatin association of RAD18 and RAD18-mediated PCNA ubiquitination and translesion DNA synthesis. Interacts (via C-terminus and phosphorylated form) with SLF1 (via BRCT domains); this interaction is required for efficient repair of UV-induced DNA damage. Interacts with SLF2. Interacts with SMC5; this interaction is increased in a SLF1 or SLF2-dependent manner. Interacts with DNA damage up-regulated protein DDUP. Forms a complex with DDUP and H2AX following DDUP phosphorylation.

It is found in the nucleus. Its subcellular location is the cytoplasm. The protein localises to the cytoskeleton. It localises to the microtubule organizing center. The protein resides in the centrosome. The enzyme catalyses S-ubiquitinyl-[E2 ubiquitin-conjugating enzyme]-L-cysteine + [acceptor protein]-L-lysine = [E2 ubiquitin-conjugating enzyme]-L-cysteine + N(6)-ubiquitinyl-[acceptor protein]-L-lysine.. Its pathway is protein modification; protein ubiquitination. In terms of biological role, E3 ubiquitin-protein ligase involved in postreplication repair of UV-damaged DNA. Postreplication repair functions in gap-filling of a daughter strand on replication of damaged DNA. Associates to the E2 ubiquitin conjugating enzyme UBE2B to form the UBE2B-RAD18 ubiquitin ligase complex involved in mono-ubiquitination of DNA-associated PCNA on 'Lys-164'. Has ssDNA binding activity. The polypeptide is E3 ubiquitin-protein ligase RAD18 (RAD18) (Homo sapiens (Human)).